A 205-amino-acid polypeptide reads, in one-letter code: High frequency lysogenization protein HflD homolog (205 aa).

Belongs to the HflD family.

The protein resides in the cytoplasm. It localises to the cell inner membrane. In Shewanella baltica (strain OS155 / ATCC BAA-1091), this protein is High frequency lysogenization protein HflD homolog.